The primary structure comprises 313 residues: Protein FixB (313 aa).

Position 255 to 283 (255 to 283) interacts with FAD; the sequence is LYLAVGISGQIQHMVGANASQTIFAINKD.

This sequence belongs to the ETF alpha-subunit/FixB family. As to quaternary structure, heterodimer of FixA and FixB.

It participates in amine and polyamine metabolism; carnitine metabolism. Required for anaerobic carnitine reduction. May bring reductant to CaiA. This chain is Protein FixB, found in Shigella flexneri.